A 734-amino-acid chain; its full sequence is MSMFIRKEIDLGSGKTLSIETGKMAKQADGSAIVRLNDTMVLATVVSSKTPPSPNQSFFPLQVEYREKYSAAGKFPGGFFKREGRPSEKEILSARLIDRALRPLFPDGYYQDTQIIISVISSDQINDADVLGGVAASAAIMVSDIPFQNSMSEVRVGRVNGEYIVNPNINELRDSDIDISIGGTENTICMLEGEMDEISEAEMLEAIRFGHEAIKKICALQNEIAAEVGKTARTFSAAKAPDNLRQSIAEICSNELKELAYMPLCKEERAEKTAEIYKNAKAQTLQRYQQEITPEVIAAEPEKALYLNEQIIGDAIHSIEKQVMREMILDDAKRLDGRRLDEVRPISIELGLIPRAHGSALFTRGETQALVTLTLGTKKDAQMIDTLTDDADKRFMLHYNFPPFSVGETGRVGGTSRREIGHGNLAERAIRKVAPAESAFPYTIRIVSDILESNGSSSMASVCGGALAAMDGGVPLRKPVSGIAMGLIKEGDRYAVLSDILGNEDHLGDMDFKVAGTADGITACQMDIKIDGLDYHILEQALEQALHGRLHILDKMNEAIQEPRTEIGKYAPKLTTIQIPVDAIGMVIGKGGETIRSITEETGAEINIEDDGTVTIASASGEGASAALETIKLLISKPEVGTVYSGKVRDIREDLGAFVEFLPKTDGLVHISEISNERVAKVSDHLKPGDKVKVKLVDVRKDPRTGKTRFALSIKALAEKSADNGASDKAEANR.

Mg(2+) is bound by residues Asp505 and Asp511. Residues 572-631 (PKLTTIQIPVDAIGMVIGKGGETIRSITEETGAEINIEDDGTVTIASASGEGASAALETI) form the KH domain. Residues 641–715 (GTVYSGKVRD…GKTRFALSIK (75 aa)) form the S1 motif domain.

This sequence belongs to the polyribonucleotide nucleotidyltransferase family. It depends on Mg(2+) as a cofactor.

It localises to the cytoplasm. The enzyme catalyses RNA(n+1) + phosphate = RNA(n) + a ribonucleoside 5'-diphosphate. In terms of biological role, involved in mRNA degradation. Catalyzes the phosphorolysis of single-stranded polyribonucleotides processively in the 3'- to 5'-direction. The protein is Polyribonucleotide nucleotidyltransferase of Prosthecochloris aestuarii (strain DSM 271 / SK 413).